The following is a 93-amino-acid chain: Small ribosomal subunit protein uS19 (93 aa).

It belongs to the universal ribosomal protein uS19 family.

Functionally, protein S19 forms a complex with S13 that binds strongly to the 16S ribosomal RNA. The protein is Small ribosomal subunit protein uS19 of Geobacter sulfurreducens (strain ATCC 51573 / DSM 12127 / PCA).